A 551-amino-acid chain; its full sequence is Calnexin (551 aa).

The first 23 residues, 1–23 (MRPQNVAGVAGTGALIMAAGALA), serve as a signal peptide directing secretion. Residues 24-477 (DQTVFHPTSL…QAIKQMPEVA (454 aa)) are Lumenal-facing. The segment at 293-315 (EEEPETIPDPEAEKPEEWDDEED) is disordered. Residues 478 to 498 (AGLAAAVFTLLGMLLALFGFI) form a helical membrane-spanning segment. At 499 to 551 (GSAPTKVKQTTVKTKAVAPVAPAGEEEKKALDQAGVEIPAEGSKKRVTRSTKE) the chain is on the cytoplasmic side. A disordered region spans residues 526–551 (KKALDQAGVEIPAEGSKKRVTRSTKE).

This sequence belongs to the calreticulin family.

It localises to the endoplasmic reticulum membrane. Its function is as follows. Endoplasmic reticulum (ER) chaperone that functions to stabilize non-native glycoproteins and retain them in the ER until they are properly folded or targeted for ER associated degradation (ERAD). With co-chaperone DNJ1, coordinately maintains ER homeostasis and contributes to maintenance of cell wall architecture. The protein is Calnexin of Cryptococcus neoformans var. grubii serotype A (strain H99 / ATCC 208821 / CBS 10515 / FGSC 9487) (Filobasidiella neoformans var. grubii).